The primary structure comprises 104 residues: ATP-dependent Clp protease adapter protein ClpS (104 aa).

This sequence belongs to the ClpS family. Binds to the N-terminal domain of the chaperone ClpA.

In terms of biological role, involved in the modulation of the specificity of the ClpAP-mediated ATP-dependent protein degradation. The polypeptide is ATP-dependent Clp protease adapter protein ClpS (Paraburkholderia xenovorans (strain LB400)).